Consider the following 122-residue polypeptide: Large ribosomal subunit protein bL12 (122 aa).

The protein belongs to the bacterial ribosomal protein bL12 family. As to quaternary structure, homodimer. Part of the ribosomal stalk of the 50S ribosomal subunit. Forms a multimeric L10(L12)X complex, where L10 forms an elongated spine to which 2 to 4 L12 dimers bind in a sequential fashion. Binds GTP-bound translation factors.

Its function is as follows. Forms part of the ribosomal stalk which helps the ribosome interact with GTP-bound translation factors. Is thus essential for accurate translation. This chain is Large ribosomal subunit protein bL12, found in Mesoplasma florum (strain ATCC 33453 / NBRC 100688 / NCTC 11704 / L1) (Acholeplasma florum).